Consider the following 360-residue polypeptide: Phenylalanine--tRNA ligase alpha subunit (360 aa).

E260 is a binding site for Mg(2+).

It belongs to the class-II aminoacyl-tRNA synthetase family. Phe-tRNA synthetase alpha subunit type 1 subfamily. As to quaternary structure, tetramer of two alpha and two beta subunits. The cofactor is Mg(2+).

It is found in the cytoplasm. The catalysed reaction is tRNA(Phe) + L-phenylalanine + ATP = L-phenylalanyl-tRNA(Phe) + AMP + diphosphate + H(+). This chain is Phenylalanine--tRNA ligase alpha subunit, found in Bradyrhizobium diazoefficiens (strain JCM 10833 / BCRC 13528 / IAM 13628 / NBRC 14792 / USDA 110).